We begin with the raw amino-acid sequence, 980 residues long: LRR receptor-like serine/threonine-protein kinase SIK1 (980 aa).

The signal sequence occupies residues 1–24 (MAAARAPWLWWWVVVVVGVAVAEA). The Extracellular portion of the chain corresponds to 25–588 (ASGGGGGGDG…HGQRVNISKT (564 aa)). 2 N-linked (GlcNAc...) asparagine glycosylation sites follow: N72 and N81. 20 LRR repeats span residues 75–98 (FAVL…IGEL), 99–122 (KNLQ…IGDC), 124–146 (SLKY…ISKL), 147–170 (KQLE…LSQI), 171–194 (PNLK…IYWN), 196–218 (VLQY…MCQL), 219–242 (TGLW…IGNC), 243–265 (TSFE…NIGF), 266–289 (LQVA…IGLM), 290–312 (QALA…ILGN), 314–337 (SYTG…LGNM), 338–361 (SKLS…LGKL), 362–385 (EELF…ISSC), 387–408 (ALNK…GFQK), 409–433 (LESL…LGHI), 435–457 (NLDT…IGDL), 458–480 (EHLL…EFGN), 481–505 (LRSV…LGQL), 507–529 (NLDS…LANC), and 531–554 (SLNN…NFSK). N230 and N241 each carry an N-linked (GlcNAc...) asparagine glycan. N-linked (GlcNAc...) asparagine glycosylation is found at N312 and N336. N381, N399, and N416 each carry an N-linked (GlcNAc...) asparagine glycan. Residues N464 and N493 are each glycosylated (N-linked (GlcNAc...) asparagine). N-linked (GlcNAc...) asparagine glycans are attached at residues N536, N541, N551, and N584. Residues 589–609 (AIACIILGFIILLCVLLLAIY) form a helical membrane-spanning segment. The Cytoplasmic segment spans residues 610-980 (KTNQPQPLVK…FGEVISKHTM (371 aa)). The Protein kinase domain occupies 653-923 (LSEKYIIGYG…EVARVLLSLL (271 aa)). ATP contacts are provided by residues 659–667 (IGYGASSTV) and K681. Catalysis depends on D778, which acts as the Proton acceptor.

This sequence belongs to the protein kinase superfamily. Ser/Thr protein kinase family. Post-translationally, autophosphorylated. As to expression, expressed in nodes, vascular bundles of stems, and anthers.

It localises to the cell membrane. The enzyme catalyses L-seryl-[protein] + ATP = O-phospho-L-seryl-[protein] + ADP + H(+). It catalyses the reaction L-threonyl-[protein] + ATP = O-phospho-L-threonyl-[protein] + ADP + H(+). Functionally, receptor kinase involved in salt drought stress responses. Acts as a positive regulator of salt and drought tolerance. May promote salt and drought tolerance through the induction of the activities of antioxidative enzymes, such as peroxidase, superoxide dismutase and catalase. May be involved in the control of stomatal development in leaf epidermis. Possesses kinase activity in vitro. Does not seem to be involved in heat tolerance. The polypeptide is LRR receptor-like serine/threonine-protein kinase SIK1 (Oryza sativa subsp. japonica (Rice)).